The following is a 181-amino-acid chain: Large ribosomal subunit protein uL5 (181 aa).

The protein belongs to the universal ribosomal protein uL5 family. In terms of assembly, part of the 50S ribosomal subunit; part of the 5S rRNA/L5/L18/L25 subcomplex. Contacts the 5S rRNA and the P site tRNA. Forms a bridge to the 30S subunit in the 70S ribosome.

Functionally, this is one of the proteins that bind and probably mediate the attachment of the 5S RNA into the large ribosomal subunit, where it forms part of the central protuberance. In the 70S ribosome it contacts protein S13 of the 30S subunit (bridge B1b), connecting the 2 subunits; this bridge is implicated in subunit movement. Contacts the P site tRNA; the 5S rRNA and some of its associated proteins might help stabilize positioning of ribosome-bound tRNAs. The sequence is that of Large ribosomal subunit protein uL5 from Picosynechococcus sp. (strain ATCC 27264 / PCC 7002 / PR-6) (Agmenellum quadruplicatum).